The primary structure comprises 175 residues: 2-oxo-4-hydroxy-4-carboxy-5-ureidoimidazoline decarboxylase (175 aa).

Histidine 67 (proton donor) is an active-site residue. Substrate-binding positions include proline 68, 84-88, and 119-123; these read SRGEQ and FVICA. The short motif at 173–175 is the Microbody targeting signal element; it reads TKL.

Belongs to the OHCU decarboxylase family. In terms of assembly, homodimer.

The protein resides in the peroxisome. The enzyme catalyses 5-hydroxy-2-oxo-4-ureido-2,5-dihydro-1H-imidazole-5-carboxylate + H(+) = (S)-allantoin + CO2. It participates in purine metabolism; urate degradation; (S)-allantoin from urate: step 3/3. Its function is as follows. Catalyzes the stereoselective decarboxylation of 2-oxo-4-hydroxy-4-carboxy-5-ureidoimidazoline (OHCU) to (S)-allantoin. In Amia calva (Bowfin), this protein is 2-oxo-4-hydroxy-4-carboxy-5-ureidoimidazoline decarboxylase (urad).